A 229-amino-acid polypeptide reads, in one-letter code: Ribonuclease T (229 aa).

Positions 23–197 (VIIDVETAGF…YDTERTAKLF (175 aa)) constitute an Exonuclease domain. Residues Asp26, Glu28, His184, and Asp189 each contribute to the Mg(2+) site. His184 functions as the Proton donor/acceptor in the catalytic mechanism.

It belongs to the RNase T family. As to quaternary structure, homodimer. The cofactor is Mg(2+).

Trims short 3' overhangs of a variety of RNA species, leaving a one or two nucleotide 3' overhang. Responsible for the end-turnover of tRNA: specifically removes the terminal AMP residue from uncharged tRNA (tRNA-C-C-A). Also appears to be involved in tRNA biosynthesis. The protein is Ribonuclease T of Haemophilus influenzae (strain 86-028NP).